Here is a 237-residue protein sequence, read N- to C-terminus: N-demethylindolmycin N-methyltransferase (237 aa).

The protein belongs to the methyltransferase superfamily.

The catalysed reaction is N-demethylindolmycin + S-adenosyl-L-methionine = indolmycin + S-adenosyl-L-homocysteine + H(+). Involved in the biosynthesis of the antibiotic indolmycin, an inhibitor of the bacterial tryptophan-tRNA synthetases. Catalyzes the methylation of N-demethylindolmycin to yield indolmycin, with S-adenosylmethionine (AdoMet) acting as the methyl donor. The polypeptide is N-demethylindolmycin N-methyltransferase (Streptomyces griseus).